Reading from the N-terminus, the 289-residue chain is tRNA-cytidine(32) 2-sulfurtransferase (289 aa).

The PP-loop motif signature appears at 39-44 (SGGKDS). [4Fe-4S] cluster contacts are provided by Cys114, Cys117, and Cys205.

Belongs to the TtcA family. As to quaternary structure, homodimer. It depends on Mg(2+) as a cofactor. The cofactor is [4Fe-4S] cluster.

Its subcellular location is the cytoplasm. It carries out the reaction cytidine(32) in tRNA + S-sulfanyl-L-cysteinyl-[cysteine desulfurase] + AH2 + ATP = 2-thiocytidine(32) in tRNA + L-cysteinyl-[cysteine desulfurase] + A + AMP + diphosphate + H(+). It functions in the pathway tRNA modification. Functionally, catalyzes the ATP-dependent 2-thiolation of cytidine in position 32 of tRNA, to form 2-thiocytidine (s(2)C32). The sulfur atoms are provided by the cysteine/cysteine desulfurase (IscS) system. This Deinococcus geothermalis (strain DSM 11300 / CIP 105573 / AG-3a) protein is tRNA-cytidine(32) 2-sulfurtransferase.